The following is a 106-amino-acid chain: N(4)-acetylcytidine amidohydrolase (106 aa).

An ASCH domain is found at T9 to I105. The active-site Proton acceptor is K23. The Nucleophile role is filled by T26. Catalysis depends on E76, which acts as the Proton donor.

The protein belongs to the N(4)-acetylcytidine amidohydrolase family.

It carries out the reaction N(4)-acetylcytidine + H2O = cytidine + acetate + H(+). The enzyme catalyses N(4)-acetyl-2'-deoxycytidine + H2O = 2'-deoxycytidine + acetate + H(+). The catalysed reaction is N(4)-acetylcytosine + H2O = cytosine + acetate + H(+). Catalyzes the hydrolysis of N(4)-acetylcytidine (ac4C). This Vibrio campbellii (strain ATCC BAA-1116) protein is N(4)-acetylcytidine amidohydrolase.